Reading from the N-terminus, the 447-residue chain is Mannose/glucose-specific lectin (447 aa).

3 tandem repeats follow at residues 1 to 149 (SLKG…VQPV), 150 to 295 (PHGT…VKPR), and 296 to 447 (DVEG…DTAV). Positions 1–447 (SLKGMISVGP…GIFVKPDTAV (447 aa)) are 3 X approximate tandem repeats. 3 consecutive Jacalin-type lectin domains span residues 5-148 (MISV…FVQP), 153-294 (TISF…YVKP), and 300-443 (SISI…FVKP).

The protein belongs to the jacalin lectin family. As to quaternary structure, homodimer. In terms of processing, the N-terminus is blocked.

In terms of biological role, mannose/glucose specific lectin. Shows agglutinating activity against rabbit erythrocytes. This chain is Mannose/glucose-specific lectin, found in Parkia platycephala.